We begin with the raw amino-acid sequence, 248 residues long: PF03932 family protein CutC (248 aa).

The protein belongs to the CutC family. In terms of assembly, homodimer.

It localises to the cytoplasm. The protein is PF03932 family protein CutC of Salmonella schwarzengrund (strain CVM19633).